The primary structure comprises 1610 residues: Protein TASOR (1610 aa).

Positions 1–96 (MATAAETEAP…PERPFRRSFQ (96 aa)) are disordered. Residue A2 is modified to N-acetylalanine. Over residues 41–51 (NGGGDGGGGAG) the composition is skewed to gly residues. Low complexity predominate over residues 52-61 (PEETAAAEAA). A Phosphoserine modification is found at S339. K581 is covalently cross-linked (Glycyl lysine isopeptide (Lys-Gly) (interchain with G-Cter in SUMO2)). Phosphoserine is present on residues S628, S631, and S668. 2 disordered regions span residues 631 to 671 (SDYE…SLDY) and 687 to 710 (KKNV…RKLE). 2 stretches are compositionally biased toward basic and acidic residues: residues 652–671 (NSRD…SLDY) and 697–710 (EDTK…RKLE). The residue at position 793 (S793) is a Phosphoserine. Residues K816 and K825 each participate in a glycyl lysine isopeptide (Lys-Gly) (interchain with G-Cter in SUMO2) cross-link. S836 is subject to Phosphoserine. K866 participates in a covalent cross-link: Glycyl lysine isopeptide (Lys-Gly) (interchain with G-Cter in SUMO2). Positions 915–941 (TGGNAGSPEDQHGKHGEKQTPDTLKGT) are disordered. A phosphoserine mark is found at S921 and K928. Basic and acidic residues predominate over residues 923-934 (EDQHGKHGEKQT). T1004 is subject to Phosphothreonine. A phosphoserine mark is found at S1059 and S1508.

It belongs to the TASOR family. As to quaternary structure, component of the HUSH complex; at least composed of TASOR, PPHLN1 and MPHOSPH8. Interacts with MORC2; the interaction associateS MORC2 with the HUSH complex which recruits MORC2 to heterochromatic loci. Interacts with ZNF638; leading to recruitment of the HUSH complex to unintegrated retroviral DNA. Interacts with INPP5A, EML1, SV1L, GPSM2, ITGB3BP, CNTN1, ETFA, PSMD8, S100A10, MPHOSPH8, TMEM100, ALB, PARPBP, HCFC2, NCBP1 and SETDB1. Present in skin, brain and testis (at protein level). Ubiquitously expressed at low levels in the majority of the organs, expressed at higher levels in kidneys, spleen, thymus, seminal vesicles, uterus, and ovaries and its expression is almost six times higher in male tissues than in females. Highly expressed in seminiferous tubules with a strong signal in Sertoli cells, spermatogonia, and spermatocytes.

The protein resides in the nucleus. Its subcellular location is the chromosome. In terms of biological role, component of the HUSH complex, a multiprotein complex that mediates epigenetic repression. The HUSH complex is recruited to genomic loci rich in H3K9me3 and is required to maintain transcriptional silencing by promoting recruitment of SETDB1, a histone methyltransferase that mediates further deposition of H3K9me3, as well as MORC2. Also represses L1 retrotransposons in collaboration with MORC2 and, probably, SETDB1, the silencing is dependent of repressive epigenetic modifications, such as H3K9me3 mark. Silencing events often occur within introns of transcriptionally active genes, and lead to the down-regulation of host gene expression. The HUSH complex is also involved in the silencing of unintegrated retroviral DNA by being recruited by ZNF638: some part of the retroviral DNA formed immediately after infection remains unintegrated in the host genome and is transcriptionally repressed. Plays a crucial role in early embryonic development. Involved in the organization of spindle poles and spindle apparatus assembly during zygotic division. Plays an important role in maintaining epiblast fitness or potency. The chain is Protein TASOR from Mus musculus (Mouse).